A 317-amino-acid chain; its full sequence is Taste receptor type 2 member 14 (317 aa).

Residues M1 to S7 are Extracellular-facing. A helical transmembrane segment spans residues I8–A28. Residues L29–R55 are Cytoplasmic-facing. Residues I56 to F76 traverse the membrane as a helical segment. Residues A77–N87 are Extracellular-facing. The cholesterol site is built by T86 and W89. A helical membrane pass occupies residues I88–F108. The Cytoplasmic portion of the chain corresponds to L109–V129. Residues V130 to I150 form a helical membrane-spanning segment. The Extracellular segment spans residues H151 to T184. N-linked (GlcNAc...) asparagine glycans are attached at residues N153, N162, and N171. V180 lines the cholesterol pocket. The helical transmembrane segment at V185–L205 threads the bilayer. The Cytoplasmic portion of the chain corresponds to W206–S232. The chain crosses the membrane as a helical span at residues V233–T253. The Extracellular portion of the chain corresponds to S254–L261. A helical membrane pass occupies residues I262–L282. Residues S265 and M268 each coordinate cholesterol. Over G283–S317 the chain is Cytoplasmic.

The protein belongs to the G-protein coupled receptor T2R family. Core component of the TAS2R14-GNAI1 complex, consisting of TAS2R14, GNAI1, GNB1 and GNG2; within the complex interacts with GNAI1. Core component of the TAS2R14-GNAT3 complex, consisting of TAS2R14, GNAT3, GNB1 and GNG2; within the complex interacts with GNAT3. Core component of the TAS2R14-GNAS2 complex, consisting of TAS2R14, GNAS2, GNB1 and GNG2; within the complex interacts with GNAS2.

The protein localises to the membrane. The enzyme catalyses Ca(2+)(in) = Ca(2+)(out). The catalysed reaction is 3',5'-cyclic AMP(in) = 3',5'-cyclic AMP(out). Basal activity is enhanced by binding to bitter tastants, such as flufenamic acid and aristolochic acid. Regulated by cholesterol in a concentration-dependent manner. Gustducin-linked G-protein coupled receptor that plays a role in the perception of bitterness. The activity of this receptor stimulates GNAT3, activating the gustducin G-protein pathway. Likely plays a role in sensing the chemical composition of the gastrointestinal content and other extra-oral tissues via the inhibitory G-protein pathways. The protein is Taste receptor type 2 member 14 (TAS2R14) of Gorilla gorilla gorilla (Western lowland gorilla).